The following is an 85-amino-acid chain: Toxin BmKT (85 aa).

A signal peptide spans 1–19; the sequence is MNYLVFFSLALLLMTGVES. Positions 21–83 constitute an LCN-type CS-alpha/beta domain; the sequence is RDGYIADDKN…VPIRVPGKCN (63 aa). 4 disulfides stabilise this stretch: cysteine 31–cysteine 82, cysteine 35–cysteine 55, cysteine 41–cysteine 65, and cysteine 45–cysteine 67.

Belongs to the long (4 C-C) scorpion toxin superfamily. Sodium channel inhibitor family. Alpha subfamily. As to expression, expressed by the venom gland.

The protein resides in the secreted. In terms of biological role, binds to sodium channels (Nav) and inhibits the inactivation of the activated channels, thereby blocking neuronal transmission. Tested on mice, has antitumor effect and strong inhibitory effect on pain. This chain is Toxin BmKT, found in Olivierus martensii (Manchurian scorpion).